Here is a 152-residue protein sequence, read N- to C-terminus: Heavy metal-associated isoprenylated plant protein 22 (152 aa).

One can recognise an HMA domain in the interval 28-91 (MQTVNIKVKI…TVQSTGKKKA (64 aa)). A metal cation-binding residues include C39 and C42. The disordered stretch occupies residues 123–152 (SEQAQAQPGSTDDKLMSLFSDENPNACTVM). Over residues 142–152 (SDENPNACTVM) the composition is skewed to polar residues. Cysteine methyl ester is present on C149. The S-farnesyl cysteine moiety is linked to residue C149. Positions 150 to 152 (TVM) are cleaved as a propeptide — removed in mature form.

This sequence belongs to the HIPP family. Interacts with ZHD11/HB29. As to expression, expressed in lateral roots and mature anthers.

The protein resides in the membrane. Functionally, heavy-metal-binding protein. Binds cadmium. May be involved in cadmium transport and play a role in cadmium detoxification. In Arabidopsis thaliana (Mouse-ear cress), this protein is Heavy metal-associated isoprenylated plant protein 22.